Reading from the N-terminus, the 253-residue chain is Ditrans,polycis-undecaprenyl-diphosphate synthase ((2E,6E)-farnesyl-diphosphate specific) (253 aa).

Asp26 is an active-site residue. Asp26 is a Mg(2+) binding site. Substrate-binding positions include 27-30 (GNGR), Trp31, Arg39, His43, and 71-73 (SSE). The active-site Proton acceptor is Asn74. Positions 75, 77, and 194 each coordinate substrate. Residue His199 participates in Mg(2+) binding. 200–202 (RIS) contributes to the substrate binding site. Glu213 contacts Mg(2+).

This sequence belongs to the UPP synthase family. Homodimer. Mg(2+) serves as cofactor.

It catalyses the reaction 8 isopentenyl diphosphate + (2E,6E)-farnesyl diphosphate = di-trans,octa-cis-undecaprenyl diphosphate + 8 diphosphate. Catalyzes the sequential condensation of isopentenyl diphosphate (IPP) with (2E,6E)-farnesyl diphosphate (E,E-FPP) to yield (2Z,6Z,10Z,14Z,18Z,22Z,26Z,30Z,34E,38E)-undecaprenyl diphosphate (di-trans,octa-cis-UPP). UPP is the precursor of glycosyl carrier lipid in the biosynthesis of bacterial cell wall polysaccharide components such as peptidoglycan and lipopolysaccharide. The polypeptide is Ditrans,polycis-undecaprenyl-diphosphate synthase ((2E,6E)-farnesyl-diphosphate specific) (Shigella flexneri).